The following is a 131-amino-acid chain: Sec-independent protein translocase protein TatB (131 aa).

The chain crosses the membrane as a helical span at residues 1–21 (MFDISFAELVVVGIVALIVIG). Polar residues-rich tracts occupy residues 71–93 (NSFE…TQSA) and 111–131 (PVNT…QPNS). Residues 71-131 (NSFENSVRSE…APAEPRQPNS (61 aa)) form a disordered region.

The protein belongs to the TatB family. In terms of assembly, the Tat system comprises two distinct complexes: a TatABC complex, containing multiple copies of TatA, TatB and TatC subunits, and a separate TatA complex, containing only TatA subunits. Substrates initially bind to the TatABC complex, which probably triggers association of the separate TatA complex to form the active translocon.

Its subcellular location is the cell inner membrane. Part of the twin-arginine translocation (Tat) system that transports large folded proteins containing a characteristic twin-arginine motif in their signal peptide across membranes. Together with TatC, TatB is part of a receptor directly interacting with Tat signal peptides. TatB may form an oligomeric binding site that transiently accommodates folded Tat precursor proteins before their translocation. The sequence is that of Sec-independent protein translocase protein TatB from Nitrosomonas europaea (strain ATCC 19718 / CIP 103999 / KCTC 2705 / NBRC 14298).